We begin with the raw amino-acid sequence, 404 residues long: Protein IQ-DOMAIN 12 (404 aa).

The tract at residues 8–25 is calmodulin-binding; the sequence is FGWMKRLFICEAKARAEK. A Nuclear localization signal 1 motif is present at residues 11 to 18; that stretch reads MKRLFICE. IQ domains lie at 108–135 and 136–158; these read NVAA…ALVR and LQAI…SSHS. Positions 226–233 match the Nuclear localization signal 2 motif; it reads IKRDRMLK.

The protein belongs to the IQD family. In terms of assembly, binds to multiple calmodulin (CaM) in the presence of Ca(2+) and CaM-like proteins.

Its subcellular location is the nucleus. The protein localises to the cell membrane. In terms of biological role, may be involved in cooperative interactions with calmodulins or calmodulin-like proteins. Recruits calmodulin proteins to microtubules, thus being a potential scaffold in cellular signaling and trafficking. May associate with nucleic acids and regulate gene expression at the transcriptional or post-transcriptional level. The polypeptide is Protein IQ-DOMAIN 12 (Arabidopsis thaliana (Mouse-ear cress)).